The chain runs to 98 residues: Small ribosomal subunit protein bS20 (98 aa).

Residues 1-12 (MAPRKPSKKVGP) show a composition bias toward basic residues. The tract at residues 1–31 (MAPRKPSKKVGPQKRPSAEKRVITSKKKQLR) is disordered.

The protein belongs to the bacterial ribosomal protein bS20 family.

Binds directly to 16S ribosomal RNA. In Chlamydia trachomatis serovar L2 (strain ATCC VR-902B / DSM 19102 / 434/Bu), this protein is Small ribosomal subunit protein bS20.